Consider the following 292-residue polypeptide: Pantothenate synthetase (292 aa).

32-39 (MGFLHEGH) lines the ATP pocket. The active-site Proton donor is the His-39. Residue Gln-63 participates in (R)-pantoate binding. Gln-63 contributes to the beta-alanine binding site. 150-153 (GEKD) is an ATP binding site. Gln-156 is a binding site for (R)-pantoate. ATP contacts are provided by residues Val-179 and 187–190 (MSSR).

It belongs to the pantothenate synthetase family. Homodimer.

It localises to the cytoplasm. The catalysed reaction is (R)-pantoate + beta-alanine + ATP = (R)-pantothenate + AMP + diphosphate + H(+). The protein operates within cofactor biosynthesis; (R)-pantothenate biosynthesis; (R)-pantothenate from (R)-pantoate and beta-alanine: step 1/1. Catalyzes the condensation of pantoate with beta-alanine in an ATP-dependent reaction via a pantoyl-adenylate intermediate. The protein is Pantothenate synthetase of Myxococcus xanthus (strain DK1622).